Consider the following 156-residue polypeptide: U4/U6.U5 small nuclear ribonucleoprotein 27 kDa protein (156 aa).

A disordered region spans residues 1-98; the sequence is MGRSRSRSPE…IAAEDLEGKT (98 aa). A compositionally biased stretch (basic residues) spans 13 to 59; the sequence is RERRRSRSASRERERRRRERSRSRERRRSRSRSPHRRRSRSPRRHRS. The segment covering 66–98 has biased composition (basic and acidic residues); it reads RLKDRRDDDKKDSKESKGAKERQIAAEDLEGKT.

It belongs to the SNUT3 family. Part of a tri-snRNP complex.

It is found in the nucleus. May play a role in mRNA splicing. This is U4/U6.U5 small nuclear ribonucleoprotein 27 kDa protein (snrnp27) from Xenopus tropicalis (Western clawed frog).